A 94-amino-acid polypeptide reads, in one-letter code: Co-chaperonin GroES (94 aa).

It belongs to the GroES chaperonin family. In terms of assembly, heptamer of 7 subunits arranged in a ring. Interacts with the chaperonin GroEL.

Its subcellular location is the cytoplasm. Functionally, together with the chaperonin GroEL, plays an essential role in assisting protein folding. The GroEL-GroES system forms a nano-cage that allows encapsulation of the non-native substrate proteins and provides a physical environment optimized to promote and accelerate protein folding. GroES binds to the apical surface of the GroEL ring, thereby capping the opening of the GroEL channel. In Streptococcus agalactiae serotype III (strain NEM316), this protein is Co-chaperonin GroES.